Reading from the N-terminus, the 183-residue chain is Outer membrane protein H.8 (183 aa).

The signal sequence occupies residues 1–17; that stretch reads MKAYLALISAAVIGLAA. C18 carries the N-palmitoyl cysteine lipid modification. The S-diacylglycerol cysteine moiety is linked to residue C18. The tract at residues 27-51 is disordered; that stretch reads AEATPAAEAPASEAPAAEAAPADAA. A Plastocyanin-like domain is found at 57 to 183; that stretch reads GNCAATVESN…LMNGKVTLVD (127 aa). Cu cation contacts are provided by H102, C166, H171, and M175.

Requires Cu cation as cofactor.

It is found in the cell outer membrane. The sequence is that of Outer membrane protein H.8 from Neisseria meningitidis serogroup B (strain ATCC BAA-335 / MC58).